A 282-amino-acid polypeptide reads, in one-letter code: Para-Rep C1 (282 aa).

A CRESS-DNA virus Rep endonuclease domain is found at 1–99 (MASKRWCFTL…ETLISEIGAP (99 aa)). The short motif at 7-10 (CFTL) is the RCR-1 element. A divalent metal cation is bound by residues Glu38 and His47. Residues 47–49 (HLQ) carry the RCR-2 motif. The short motif at 56-77 (KMIRLGGLKKKFGYRAHWEIAK) is the Nuclear localization signal element. Tyr86 functions as the For DNA cleavage activity in the catalytic mechanism. The RCR-3 motif lies at 86–89 (YCTK). Ser94 is an a divalent metal cation binding site. 174–182 (GSDGGEGKS) provides a ligand contact to ATP.

Belongs to the nanoviridea/circoviridae replication-associated protein family. In terms of assembly, homooligomer (Potential). Rep binds to repeated DNA motifs (iterons). Mg(2+) serves as cofactor. Mn(2+) is required as a cofactor.

The protein resides in the host nucleus. The enzyme catalyses ATP + H2O = ADP + phosphate + H(+). Its function is as follows. Initiates and terminates the replication only of its own subviral DNA molecule. The closed circular ssDNA genome is first converted to a superhelical dsDNA. Rep binds a specific hairpin at the genome origin of replication. Introduces an endonucleolytic nick within the intergenic region of the genome, thereby initiating the rolling circle replication (RCR). Following cleavage, binds covalently to the 5'-phosphate of DNA as a tyrosyl ester. The cleavage gives rise to a free 3'-OH that serves as a primer for the cellular DNA polymerase. The polymerase synthesizes the (+) strand DNA by rolling circle mechanism. After one round of replication, a Rep-catalyzed nucleotidyl transfer reaction releases a circular single-stranded virus genome, thereby terminating the replication. Displays origin-specific DNA cleavage, nucleotidyl transferase, ATPase and helicase activities. This chain is Para-Rep C1 (C1), found in Faba bean necrotic yellows C11 alphasatellite (FBNYC11A).